The sequence spans 86 residues: Neurotoxin LmNaTx17 (86 aa).

Residues 1–18 form the signal peptide; the sequence is MKILFVIVLAAFFIGVHC. Positions 19–85 constitute an LCN-type CS-alpha/beta domain; that stretch reads KHGYPVQYSG…TWDYKTGKCR (67 aa). Intrachain disulfides connect Cys33/Cys84, Cys37/Cys58, Cys44/Cys65, and Cys48/Cys67.

This sequence belongs to the long (4 C-C) scorpion toxin superfamily. Sodium channel inhibitor family. Beta subfamily. In terms of tissue distribution, expressed by the venom gland.

The protein resides in the secreted. In terms of biological role, binds voltage-independently at site-4 of sodium channels (Nav) and shift the voltage of activation toward more negative potentials thereby affecting sodium channel activation and promoting spontaneous and repetitive firing. The polypeptide is Neurotoxin LmNaTx17 (Lychas mucronatus (Chinese swimming scorpion)).